Reading from the N-terminus, the 190-residue chain is UPF0200 protein TGAM_0868 (190 aa).

Residue 7 to 14 (GMPGSGKS) coordinates ATP.

Belongs to the UPF0200 family.

The chain is UPF0200 protein TGAM_0868 from Thermococcus gammatolerans (strain DSM 15229 / JCM 11827 / EJ3).